Here is a 446-residue protein sequence, read N- to C-terminus: Scytalone dehydratase-like protein Arp1 (446 aa).

Y323 contacts substrate. Active-site residues include H358 and H383. N404 lines the substrate pocket.

It belongs to the scytalone dehydratase family. In terms of assembly, homotrimer. Each subunit contains an active site, located in the central part of the hydrophobic core of the monomer, which functions independently.

Its function is as follows. Scytalone dehydratase-like protein; part of the Pks2 gene cluster that mediates the formation of infectious structures (appressoria), enabling these fungi to kill insects faster. The product of the Pks2 gene cluster is different from the one of Pks1 and has still not been identified. The sequence is that of Scytalone dehydratase-like protein Arp1 from Metarhizium acridum (strain CQMa 102).